A 420-amino-acid polypeptide reads, in one-letter code: Serine hydroxymethyltransferase (420 aa).

(6S)-5,6,7,8-tetrahydrofolate-binding positions include leucine 121 and glycine 125 to leucine 127. Lysine 229 carries the post-translational modification N6-(pyridoxal phosphate)lysine.

Belongs to the SHMT family. As to quaternary structure, homodimer. Pyridoxal 5'-phosphate serves as cofactor.

The protein localises to the cytoplasm. The enzyme catalyses (6R)-5,10-methylene-5,6,7,8-tetrahydrofolate + glycine + H2O = (6S)-5,6,7,8-tetrahydrofolate + L-serine. Its pathway is one-carbon metabolism; tetrahydrofolate interconversion. It functions in the pathway amino-acid biosynthesis; glycine biosynthesis; glycine from L-serine: step 1/1. Catalyzes the reversible interconversion of serine and glycine with tetrahydrofolate (THF) serving as the one-carbon carrier. This reaction serves as the major source of one-carbon groups required for the biosynthesis of purines, thymidylate, methionine, and other important biomolecules. Also exhibits THF-independent aldolase activity toward beta-hydroxyamino acids, producing glycine and aldehydes, via a retro-aldol mechanism. This is Serine hydroxymethyltransferase from Streptomyces coelicolor (strain ATCC BAA-471 / A3(2) / M145).